The chain runs to 756 residues: Neutral ceramidase (756 aa).

Residues 1–11 (MAKRTFSTLEA) are Cytoplasmic-facing. A helical; Signal-anchor for type II membrane protein transmembrane segment spans residues 12 to 32 (FLIFLLVIMTVITVALLTLLF). The Lumenal segment spans residues 33-756 (VTSGTIENHK…ISSPFEVVTT (724 aa)). O-linked (GalNAc...) threonine glycosylation is found at Thr56, Thr57, Thr58, and Thr64. Leu110 is a binding site for Ca(2+). Residue His170 participates in Zn(2+) binding. Asn193 is a glycosylation site (N-linked (GlcNAc...) asparagine). His279 lines the Zn(2+) pocket. Ser330 (nucleophile) is an active-site residue. Cystine bridges form between Cys338/Cys352 and Cys345/Cys360. Asn407 and Asn444 each carry an N-linked (GlcNAc...) asparagine glycan. A disulfide bridge connects residues Cys424 and Cys474. Zn(2+) contacts are provided by Glu516 and Tyr555. Ca(2+)-binding residues include Asp688, Ser690, and Thr693. Positions 746 to 756 (GISSPFEVVTT) are required for correct folding and localization.

This sequence belongs to the neutral ceramidase family. As to quaternary structure, may interact with CAV1. Zn(2+) is required as a cofactor. Post-translationally, proteolytic cleavage of the N-terminus removes the signal-anchor and produces a soluble form of the protein. N-glycosylated. Required for enzyme activity. In terms of processing, O-glycosylated. Required to retain it as a type II membrane protein at the cell surface. Post-translationally, phosphorylated. May prevent ubiquitination and subsequent degradation. Ubiquitinated, leading to its degradation by the proteasome. Ubiquitination is triggered by nitric oxide. As to expression, widely expressed. Strongly expressed in small intestine and to a lower extent in liver and kidney. Highly expressed in duodenum, jejunum and ileum along the brush border of the small intestine (at protein level).

Its subcellular location is the cell membrane. It is found in the membrane raft. It localises to the membrane. The protein resides in the caveola. The protein localises to the golgi apparatus membrane. Its subcellular location is the mitochondrion. It is found in the secreted. It localises to the extracellular exosome. It carries out the reaction an N-acylsphing-4-enine + H2O = sphing-4-enine + a fatty acid. The enzyme catalyses N-hexadecanoylsphing-4-enine + H2O = sphing-4-enine + hexadecanoate. The catalysed reaction is N-dodecanoylsphing-4-enine + H2O = dodecanoate + sphing-4-enine. It catalyses the reaction N-octadecanoylsphing-4-enine + H2O = sphing-4-enine + octadecanoate. It carries out the reaction N-octanoylsphing-4-enine + H2O = octanoate + sphing-4-enine. The enzyme catalyses N-(hexanoyl)sphing-4-enine + H2O = hexanoate + sphing-4-enine. The catalysed reaction is N-tetradecanoylsphing-4-enine + H2O = tetradecanoate + sphing-4-enine. It catalyses the reaction N-(9Z-octadecenoyl)-sphing-4-enine + H2O = sphing-4-enine + (9Z)-octadecenoate. It carries out the reaction N-(15Z-tetracosenoyl)-sphing-4-enine + H2O = (15Z)-tetracosenoate + sphing-4-enine. The enzyme catalyses sphinganine + hexadecanoate = N-hexadecanoylsphinganine + H2O. The catalysed reaction is N-(octadecanoyl)-sphinganine + H2O = sphinganine + octadecanoate. It participates in lipid metabolism; sphingolipid metabolism. Inhibited by D-erythro-MAPP. Its function is as follows. Plasma membrane ceramidase that hydrolyzes sphingolipid ceramides into sphingosine and free fatty acids at neutral pH. Ceramides, sphingosine, and its phosphorylated form sphingosine-1-phosphate are bioactive lipids that mediate cellular signaling pathways regulating several biological processes including cell proliferation, apoptosis and differentiation. Also catalyzes the reverse reaction allowing the synthesis of ceramides from fatty acids and sphingosine. Together with sphingomyelinase, participates in the production of sphingosine and sphingosine-1-phosphate from the degradation of sphingomyelin, a sphingolipid enriched in the plasma membrane of cells. Also participates in the hydrolysis of ceramides from the extracellular milieu allowing the production of sphingosine-1-phosphate inside and outside cells. This is the case for instance with the digestion of dietary sphingolipids in the intestinal tract. This is Neutral ceramidase (Asah2) from Mus musculus (Mouse).